The chain runs to 350 residues: Phosphotriesterase-related protein (350 aa).

Residues His22, His24, Glu169, His201, His230, and Asp298 each contribute to the a divalent metal cation site.

This sequence belongs to the metallo-dependent hydrolases superfamily. Phosphotriesterase family. A divalent metal cation is required as a cofactor.

This chain is Phosphotriesterase-related protein, found in Drosophila willistoni (Fruit fly).